A 418-amino-acid polypeptide reads, in one-letter code: Tyrosine--tRNA ligase (418 aa).

Tyr34 contributes to the L-tyrosine binding site. The 'HIGH' region motif lies at 39-48; sequence PTADSLHLGH. L-tyrosine contacts are provided by Tyr169 and Gln173. Positions 229–233 match the 'KMSKS' region motif; the sequence is KFGKS. Residue Lys232 coordinates ATP. Positions 352 to 418 constitute an S4 RNA-binding domain; that stretch reads NNIVELLVSS…GKKKYFVLTY (67 aa).

It belongs to the class-I aminoacyl-tRNA synthetase family. TyrS type 1 subfamily. Homodimer.

The protein localises to the cytoplasm. The catalysed reaction is tRNA(Tyr) + L-tyrosine + ATP = L-tyrosyl-tRNA(Tyr) + AMP + diphosphate + H(+). Its function is as follows. Catalyzes the attachment of tyrosine to tRNA(Tyr) in a two-step reaction: tyrosine is first activated by ATP to form Tyr-AMP and then transferred to the acceptor end of tRNA(Tyr). The polypeptide is Tyrosine--tRNA ligase (Streptococcus pneumoniae (strain ATCC BAA-255 / R6)).